Here is a 668-residue protein sequence, read N- to C-terminus: tRNA 5-methylaminomethyl-2-thiouridine biosynthesis bifunctional protein MnmC (668 aa).

Residues 1 to 245 form a tRNA (mnm(5)s(2)U34)-methyltransferase region; it reads MKHYSIQPAN…KREMLCGVME (245 aa). The tract at residues 270-668 is FAD-dependent cmnm(5)s(2)U34 oxidoreductase; the sequence is IGGGIACALL…LLKGKAVKAG (399 aa).

This sequence in the N-terminal section; belongs to the methyltransferase superfamily. tRNA (mnm(5)s(2)U34)-methyltransferase family. The protein in the C-terminal section; belongs to the DAO family. It depends on FAD as a cofactor.

It localises to the cytoplasm. It carries out the reaction 5-aminomethyl-2-thiouridine(34) in tRNA + S-adenosyl-L-methionine = 5-methylaminomethyl-2-thiouridine(34) in tRNA + S-adenosyl-L-homocysteine + H(+). Functionally, catalyzes the last two steps in the biosynthesis of 5-methylaminomethyl-2-thiouridine (mnm(5)s(2)U) at the wobble position (U34) in tRNA. Catalyzes the FAD-dependent demodification of cmnm(5)s(2)U34 to nm(5)s(2)U34, followed by the transfer of a methyl group from S-adenosyl-L-methionine to nm(5)s(2)U34, to form mnm(5)s(2)U34. This is tRNA 5-methylaminomethyl-2-thiouridine biosynthesis bifunctional protein MnmC from Shigella boydii serotype 18 (strain CDC 3083-94 / BS512).